An 80-amino-acid chain; its full sequence is Teretoxin Tan6.1 (80 aa).

The N-terminal stretch at 1–21 is a signal peptide; the sequence is MATSGRLLCLCLVLGLVFESL. A propeptide spanning residues 22-34 is cleaved from the precursor; that stretch reads GHPGARLPKDGKR.

This sequence belongs to the teretoxin M (TM) superfamily. In terms of processing, contains 3 disulfide bonds. As to expression, expressed by the venom duct.

It is found in the secreted. This is Teretoxin Tan6.1 from Terebra anilis (Auger snail).